A 413-amino-acid chain; its full sequence is MNHLKRQDEKVFAAIEAELGRQRSKIELIASENFVSEAVMEAQGSVLTNKYAEGYPGKRYYGGCEHVDVVEDIARDRAKEIFGAEHVNVQPHSGAQANMAVYFTILEQGDTVLGMNLSHGGHLTHGSPVNFSGVQYNFVEYGVDAESHRINYDDVLAKAKEHKPKLIVAGASAYPRVIDFKRFREIADEVGAYFMVDMAHIAGLVAAGLHPNPVPHAHFVTTTTHKTLRGPRGGMILCEEQFAKQIDKSIFPGIQGGPLMHVIAAKAVAFGETLQDEFKTYAQHIINNANRLAEGLQKEGLTLVSGGTDNHLILIDVRNLEITGKVAEHVLDEVGITVNKNTIPFETASPFVTSGVRIGTAAVTSRGFGLEEMDEIAALIAYTLKNHENEVALEEASKRVEALTSKFSMYTDL.

Residues Leu-117 and 121–123 each bind (6S)-5,6,7,8-tetrahydrofolate; that span reads GHL. At Lys-226 the chain carries N6-(pyridoxal phosphate)lysine. (6S)-5,6,7,8-tetrahydrofolate is bound by residues Glu-239 and 349–351; that span reads SPF.

This sequence belongs to the SHMT family. Homodimer. Pyridoxal 5'-phosphate is required as a cofactor.

The protein localises to the cytoplasm. The catalysed reaction is (6R)-5,10-methylene-5,6,7,8-tetrahydrofolate + glycine + H2O = (6S)-5,6,7,8-tetrahydrofolate + L-serine. It participates in one-carbon metabolism; tetrahydrofolate interconversion. It functions in the pathway amino-acid biosynthesis; glycine biosynthesis; glycine from L-serine: step 1/1. Catalyzes the reversible interconversion of serine and glycine with tetrahydrofolate (THF) serving as the one-carbon carrier. This reaction serves as the major source of one-carbon groups required for the biosynthesis of purines, thymidylate, methionine, and other important biomolecules. Also exhibits THF-independent aldolase activity toward beta-hydroxyamino acids, producing glycine and aldehydes, via a retro-aldol mechanism. The sequence is that of Serine hydroxymethyltransferase from Bacillus mycoides (strain KBAB4) (Bacillus weihenstephanensis).